A 181-amino-acid polypeptide reads, in one-letter code: MLEKSKQKNSFDKNKFIINNKISFPIVRIIDENNYQLGIYKIEDALKLAEEKNLDLVLINDKTEPPVVRIIDYGKFKFAQEKKSREAKKKQHQVTVKEIKMRYKIEDHDYQVRINQAIKFLKLGNKVKISLTFKGREIQYIDLAEKLIEKIIHSLSSLAEHEKVFDKEGKNIYIMLLPKKT.

It belongs to the IF-3 family. In terms of assembly, monomer.

The protein localises to the plastid. It is found in the chloroplast. In terms of biological role, IF-3 binds to the 30S ribosomal subunit and shifts the equilibrium between 70S ribosomes and their 50S and 30S subunits in favor of the free subunits, thus enhancing the availability of 30S subunits on which protein synthesis initiation begins. In Galdieria sulphuraria (Red alga), this protein is Translation initiation factor IF-3, chloroplastic.